Consider the following 299-residue polypeptide: MADFLLRATAAAEGIRAVGVITTQLTDEARKRHQLSYVATAALGRTMAAGLILASSFKQPQARVNVRIQGNGPLGTIFADAGADGTVRGYVQYPSVELPPNAKGKLDVGAAVGHQGYLYVIHDLGYGYPYSSTVELVSGEIAEDITYYLATSEQTPSALMLGVFVEESGVTAAGGLMLQVLPKAANDEHLIATLEQRVANLKGFTPLLQAGRTLPDIFQELLGDMDLQILPQRQMVRFHCGCSHERMLAALKLLGEAELRDILATEAKAEATCQFCNAVYWADQPMLEQLIAELATASV.

2 disulfide bridges follow: cysteine 240–cysteine 242 and cysteine 273–cysteine 276.

Belongs to the HSP33 family. In terms of processing, under oxidizing conditions two disulfide bonds are formed involving the reactive cysteines. Under reducing conditions zinc is bound to the reactive cysteines and the protein is inactive.

It is found in the cytoplasm. Its function is as follows. Redox regulated molecular chaperone. Protects both thermally unfolding and oxidatively damaged proteins from irreversible aggregation. Plays an important role in the bacterial defense system toward oxidative stress. This chain is 33 kDa chaperonin, found in Thermosynechococcus vestitus (strain NIES-2133 / IAM M-273 / BP-1).